We begin with the raw amino-acid sequence, 334 residues long: Glycerol-3-phosphate dehydrogenase [NAD(P)+] (334 aa).

Residues tryptophan 13, arginine 33, and lysine 106 each contribute to the NADPH site. 3 residues coordinate sn-glycerol 3-phosphate: lysine 106, glycine 137, and serine 139. NADPH is bound at residue alanine 141. Sn-glycerol 3-phosphate is bound by residues lysine 192, aspartate 245, serine 255, arginine 256, and asparagine 257. Lysine 192 functions as the Proton acceptor in the catalytic mechanism. NADPH is bound at residue arginine 256. NADPH is bound by residues valine 280 and glutamate 282.

It belongs to the NAD-dependent glycerol-3-phosphate dehydrogenase family.

Its subcellular location is the cytoplasm. It carries out the reaction sn-glycerol 3-phosphate + NAD(+) = dihydroxyacetone phosphate + NADH + H(+). The enzyme catalyses sn-glycerol 3-phosphate + NADP(+) = dihydroxyacetone phosphate + NADPH + H(+). The protein operates within membrane lipid metabolism; glycerophospholipid metabolism. Functionally, catalyzes the reduction of the glycolytic intermediate dihydroxyacetone phosphate (DHAP) to sn-glycerol 3-phosphate (G3P), the key precursor for phospholipid synthesis. In Chlamydia pneumoniae (Chlamydophila pneumoniae), this protein is Glycerol-3-phosphate dehydrogenase [NAD(P)+].